Reading from the N-terminus, the 356-residue chain is NADH-quinone oxidoreductase subunit H (356 aa).

8 consecutive transmembrane segments (helical) span residues 18–38 (IVMI…IAYI), 87–107 (GVFL…WAVI), 120–140 (VGIL…IMAG), 166–186 (IGFV…SAVV), 205–225 (ILNW…VSAL), 265–285 (AITT…LPPI), 292–312 (WVPG…LIAM), and 333–353 (FLPL…FAGI).

This sequence belongs to the complex I subunit 1 family. As to quaternary structure, NDH-1 is composed of 14 different subunits. Subunits NuoA, H, J, K, L, M, N constitute the membrane sector of the complex.

It is found in the cell inner membrane. The catalysed reaction is a quinone + NADH + 5 H(+)(in) = a quinol + NAD(+) + 4 H(+)(out). Its function is as follows. NDH-1 shuttles electrons from NADH, via FMN and iron-sulfur (Fe-S) centers, to quinones in the respiratory chain. The immediate electron acceptor for the enzyme in this species is believed to be ubiquinone. Couples the redox reaction to proton translocation (for every two electrons transferred, four hydrogen ions are translocated across the cytoplasmic membrane), and thus conserves the redox energy in a proton gradient. This subunit may bind ubiquinone. In Bradyrhizobium sp. (strain BTAi1 / ATCC BAA-1182), this protein is NADH-quinone oxidoreductase subunit H.